Here is a 98-residue protein sequence, read N- to C-terminus: NADH-ubiquinone oxidoreductase chain 4L (98 aa).

The next 3 helical transmembrane spans lie at 2-22 (PSTFFNLTMAFSLSLLGTLMF), 26-46 (LMSTLLCLEGMVLSLFIMTSV), and 58-79 (PIPITILVFAACEAAVGLALLV).

The protein belongs to the complex I subunit 4L family. Core subunit of respiratory chain NADH dehydrogenase (Complex I) which is composed of 45 different subunits.

The protein resides in the mitochondrion inner membrane. It carries out the reaction a ubiquinone + NADH + 5 H(+)(in) = a ubiquinol + NAD(+) + 4 H(+)(out). Core subunit of the mitochondrial membrane respiratory chain NADH dehydrogenase (Complex I) which catalyzes electron transfer from NADH through the respiratory chain, using ubiquinone as an electron acceptor. Part of the enzyme membrane arm which is embedded in the lipid bilayer and involved in proton translocation. The chain is NADH-ubiquinone oxidoreductase chain 4L from Mus musculus (Mouse).